Consider the following 441-residue polypeptide: Homogentisate 1,2-dioxygenase (441 aa).

His-297 functions as the Proton acceptor in the catalytic mechanism. Fe cation is bound by residues His-340 and Glu-346. 2 residues coordinate homogentisate: Tyr-355 and His-376. Fe cation is bound at residue His-376.

Belongs to the homogentisate dioxygenase family. As to quaternary structure, hexamer; dimer of trimers. Fe cation serves as cofactor.

It carries out the reaction homogentisate + O2 = 4-maleylacetoacetate + H(+). It functions in the pathway amino-acid degradation; L-phenylalanine degradation; acetoacetate and fumarate from L-phenylalanine: step 4/6. Involved in the catabolism of homogentisate (2,5-dihydroxyphenylacetate or 2,5-OH-PhAc), a central intermediate in the degradation of phenylalanine and tyrosine. Catalyzes the oxidative ring cleavage of the aromatic ring of homogentisate to yield maleylacetoacetate. The protein is Homogentisate 1,2-dioxygenase of Streptomyces coelicolor (strain ATCC BAA-471 / A3(2) / M145).